The primary structure comprises 1015 residues: Tolloid-like protein 2 (1015 aa).

The first 25 residues, Met1–Gly25, serve as a signal peptide directing secretion. Disordered regions lie at residues Gly24–Leu49 and Val88–Leu130. The propeptide occupies Leu26–Arg149. A compositionally biased stretch (polar residues) spans Ser103–Asp113. Residues Gly115 to Glu125 are compositionally biased toward basic and acidic residues. The Peptidase M12A domain occupies Arg149–Pro349. Asn171 carries an N-linked (GlcNAc...) asparagine glycan. 4 disulfides stabilise this stretch: Cys192-Cys348, Cys212-Cys234, Cys214-Cys215, and Cys351-Cys377. His242 is a Zn(2+) binding site. Glu243 is an active-site residue. Zn(2+) contacts are provided by His246 and His252. CUB domains follow at residues Cys351 to Thr463 and Cys464 to Glu576. Residues Asn361 and Asn392 are each glycosylated (N-linked (GlcNAc...) asparagine). Disulfide bonds link Cys404-Cys426, Cys464-Cys490, Cys517-Cys539, Cys580-Cys592, Cys588-Cys601, Cys603-Cys616, Cys620-Cys646, Cys673-Cys695, Cys736-Cys747, Cys743-Cys756, Cys758-Cys771, and Cys776-Cys802. The 42-residue stretch at Glu576–Glu617 folds into the EGF-like 1; calcium-binding domain. Residues Cys620–Asp732 enclose the CUB 3 domain. N-linked (GlcNAc...) asparagine glycosylation is present at Asn628. The 41-residue stretch at Asp732 to Lys772 folds into the EGF-like 2; calcium-binding domain. CUB domains are found at residues Cys776–Glu888 and Cys889–Thr1005. The N-linked (GlcNAc...) asparagine glycan is linked to Asn805. Disulfide bonds link Cys829/Cys851, Cys889/Cys919, and Cys946/Cys968. Omega-N-methylarginine is present on residues Arg963 and Arg966.

Zn(2+) serves as cofactor.

Its subcellular location is the secreted. Its function is as follows. Protease which specifically processes pro-lysyl oxidase. Required for the embryonic development. Predominant protease, which in the development, influences dorsal-ventral patterning and skeletogenesis. The polypeptide is Tolloid-like protein 2 (TLL2) (Homo sapiens (Human)).